Consider the following 790-residue polypeptide: Pleckstrin homology domain-containing family G member 6 (790 aa).

Positions 63 to 91 (SGQARGLSPMRLRDPEPEKRHGGHVGAGL) are disordered. Residues 73–82 (RLRDPEPEKR) are compositionally biased toward basic and acidic residues. The 193-residue stretch at 161–353 (HQQEALWELL…ESFLRHINGQ (193 aa)) folds into the DH domain. The 101-residue stretch at 409–509 (QLLLEGPVRV…WLEKTQQAQA (101 aa)) folds into the PH domain. Composition is skewed to basic and acidic residues over residues 529–538 (LYRDQDRESP) and 625–635 (ELRDIPLRPHP). Disordered regions lie at residues 529–677 (LYRD…ASER), 690–730 (LRGQ…HTSL), and 748–790 (SQRI…ASEV). Over residues 748-762 (SQRIEGAEEPRDSRP) the composition is skewed to basic and acidic residues.

In terms of assembly, interacts with MYH10. Interacts with ELMO1 and EZR (in an open conformation). Interacts with CSPP1. As to expression, highest expression in the placenta. Low levels in small intestine, lung, liver, kidney, thymus and heart.

Its subcellular location is the cell projection. The protein resides in the microvillus. It localises to the cytoplasm. The protein localises to the cytoskeleton. It is found in the spindle. Its subcellular location is the spindle pole. The protein resides in the cleavage furrow. Its function is as follows. Guanine nucleotide exchange factor activating the small GTPase RHOA, which, in turn, induces myosin filament formation. Also activates RHOG. Does not activate RAC1, or to a much lower extent than RHOA and RHOG. Part of a functional unit, involving PLEKHG6, MYH10 and RHOA, at the cleavage furrow to advance furrow ingression during cytokinesis. In epithelial cells, required for the formation of microvilli and membrane ruffles on the apical pole. Along with EZR, required for normal macropinocytosis. The chain is Pleckstrin homology domain-containing family G member 6 (PLEKHG6) from Homo sapiens (Human).